The following is a 417-amino-acid chain: MLSLEPLSRPVLDSSQTLLVIFLLAFTRQNSIFRYLSIPVLTFIVKEQITQPPAVVENFHQWLNESSVPFNYLHHINILALTSIDLRNDNNGVLPGLFDRIKSAFIYQLNPRGVGTRYQVKNIPPVPEYYKKRKGYLSQRYRFVVRQLCLFVWQYLIVDVGCSLWHNLPDQERFALFGPGTEWNIINAGPQQWKVRLMAAMIFWTTARNAVDLSHRLGSAVLTGIGATSVHEWPPMCGSLRDAYTLRNLWGKWWHQQLRWTLSSHSNFVTRRLLKLPRRSLLERYLNNAIVHVFSAFIHVNGWRLAGIPDGYIGPSLFYMSFVGGYLVEDFVQHIWATLFRSRSRTSTGIFFERLTGIFWVATFLTVTTPWWIYPLLRREHSFALPVSLVESVGMNNALAMIGVGAFILKTRFDANI.

The N-linked (GlcNAc...) asparagine glycan is linked to Asn64. 3 helical membrane-spanning segments follow: residues 308 to 328 (IPDGYIGPSLFYMSFVGGYLV), 357 to 377 (GIFWVATFLTVTTPWWIYPLL), and 389 to 409 (LVESVGMNNALAMIGVGAFIL).

This sequence belongs to the wax synthase family.

It is found in the membrane. It carries out the reaction chrodrimanin A + acetyl-CoA = chrodrimanin B + CoA. The protein operates within secondary metabolite biosynthesis; terpenoid biosynthesis. Functionally, acetyltransferase; part of the gene cluster that mediates the biosynthesis of chrodrimanin B, a meroterpenoid that acts as a potent blocker of insect GABA-gated chloride channels. The first step of the pathway is the biosynthesis of 6-hydroxymellein by the polyketide synthase cdmE. The prenyltransferase cdmH acts as a 6-hydroxymellein 5-farnesyltransferase and produces the hydrophobic metabolite verruculide C. The FAD-dependent monooxygenase cdmI further converts verruculide C into verruculide B. The terpene cyclase cdmG then produced the pentacyclic molecule 3-hydroxypentacecilide A, the backbone structure of chrodrimanin B, via folding the farnesyl moiety of the substrate into the chair-boat conformation. The short-chain dehydrogenase/reductase cdmF functions as the 3-OH dehydrogenase that oxidizes the C-3 hydroxyl group of 3-hydroxypentacecilide A and produces chrodrimanin C, the dehydrogenated product of 3-hydroxypentacecilide A. The cytochrome P450 monooxygenase cdmJ then accepts both 3-hydroxypentacecilide A and chrodrimanin C and functions as a C-7-beta-hydroxylase to produce respectively chrodrimanin H and chrodrimanin F. The dioxygenase cdmA accepts chrodrimanin H to afford chrodrimanin E, which is further transformed to chrodrimanin A by the dioxygenase cdmD. CdmA can also accept chrodrimanin C as substrate to convert it into verruculide A, which is further converted into chrodrimanin T by cdmD. The last step of the biosynthesis is proposed to be performed by the acetyltransferase cdmC which acetylates chrodrimanin A to yield chrodrimanin B. The pathway may also lead to the production of additional shunt products, including chrodrimanins T and U. The polypeptide is Acetyltransferase cdmC (Talaromyces verruculosus (Penicillium verruculosum)).